A 111-amino-acid polypeptide reads, in one-letter code: UPF0122 protein CKR_1296 (111 aa).

The protein belongs to the UPF0122 family.

Functionally, might take part in the signal recognition particle (SRP) pathway. This is inferred from the conservation of its genetic proximity to ftsY/ffh. May be a regulatory protein. The protein is UPF0122 protein CKR_1296 of Clostridium kluyveri (strain NBRC 12016).